The primary structure comprises 44 residues: Photosystem I reaction center subunit IX (44 aa).

Residues 7–27 (YLSVAPVLSTLWFASLAGLLI) form a helical membrane-spanning segment.

Belongs to the PsaJ family.

Its subcellular location is the plastid. It localises to the chloroplast thylakoid membrane. In terms of biological role, may help in the organization of the PsaE and PsaF subunits. The protein is Photosystem I reaction center subunit IX of Barbarea verna (Land cress).